Reading from the N-terminus, the 1465-residue chain is Gag-Pol polyprotein (1465 aa).

Gly-2 carries the N-myristoyl glycine; by host lipid modification. An interaction with Gp41 region spans residues 7–31 (VLSGKKTDELEKVRLRPGGKKKYML). A Nuclear export signal motif is present at residues 16-22 (LEKVRLR). A Nuclear localization signal motif is present at residues 26–32 (KKKYMLK). Residues 105-114 (QRHLAADTEK) are compositionally biased toward basic and acidic residues. The disordered stretch occupies residues 105–129 (QRHLAADTEKMPATNKPTAPPSGGN). A Phosphotyrosine; by host modification is found at Tyr-130. The interaction with human PPIA/CYPA and NUP153 stretch occupies residues 186–223 (NCVGEHQAAMQIIREIINEEAADWDQQHPSPGPMPAGQ). Positions 274 to 360 (YNPTNILDIK…GGPGQKARLM (87 aa)) are dimerization/Multimerization of capsid protein p24. 2 consecutive CCHC-type zinc fingers follow at residues 388-405 (VTCW…QCRA) and 409-426 (QGCW…KCPE). The tract at residues 441 to 508 (ASQLPHDPSA…PRETLQGGDR (68 aa)) is disordered. Residues 484-501 (DAEKLHADGETTEREPRE) show a composition bias toward basic and acidic residues. Residues 513–517 (PQFSL) are dimerization of protease. The Peptidase A2 domain maps to 532 to 601 (VEVLLDTGVD…TPINIFGRNI (70 aa)). Asp-537 acts as the For protease activity; shared with dimeric partner in catalysis. 2 dimerization of protease regions span residues 561–567 (GIGGFIN) and 600–612 (NILN…LNFP). The Reverse transcriptase domain maps to 655-844 (EGQLEEAPPT…PPFKWMGYEL (190 aa)). Mg(2+)-binding residues include Asp-720, Asp-795, and Asp-796. Residues 837-845 (FKWMGYELW) form an RT 'primer grip' region. Positions 1007–1023 (WDQWWTDYWQVTWIPEW) match the Tryptophan repeat motif motif. The 124-residue stretch at 1043 to 1166 (LEGRETYYTD…VDHLVSQGIR (124 aa)) folds into the RNase H type-1 domain. Residues Asp-1052, Glu-1087, Asp-1107, and Asp-1158 each contribute to the Mg(2+) site. The Integrase-type zinc-finger motif lies at 1172–1213 (EKIEPAQEEHEKYHGNVKELVHKFGIPQLVAKQIVNSCDKCQ). Residues His-1181, His-1185, Cys-1209, and Cys-1212 each coordinate Zn(2+). The Integrase catalytic domain occupies 1222–1373 (QVNADLGTWQ…TPAERLVNMI (152 aa)). Mg(2+)-binding residues include Asp-1233, Asp-1285, and Glu-1321. Residues 1392-1439 (FQVYYREGRDQLWKGPGELLWKGEGAVIIKVGTEIKVVPRRKAKIIRH) constitute a DNA-binding region (integrase-type).

As to quaternary structure, homotrimer; further assembles as hexamers of trimers. Interacts with gp41 (via C-terminus). Interacts with host CALM1; this interaction induces a conformational change in the Matrix protein, triggering exposure of the myristate group. Interacts with host AP3D1; this interaction allows the polyprotein trafficking to multivesicular bodies during virus assembly. Part of the pre-integration complex (PIC) which is composed of viral genome, matrix protein, Vpr and integrase. Homodimer; the homodimer further multimerizes as homohexamers or homopentamers. Interacts with human PPIA/CYPA. Interacts with human NUP153. Interacts with host PDZD8; this interaction stabilizes the capsid. Interacts with monkey TRIM5; this interaction destabilizes the capsid. In terms of assembly, homodimer, whose active site consists of two apposed aspartic acid residues. As to quaternary structure, heterodimer of p66 RT and p51 RT (RT p66/p51). Heterodimerization of RT is essential for DNA polymerase activity. The overall folding of the subdomains is similar in p66 RT and p51 RT but the spatial arrangements of the subdomains are dramatically different. Homotetramer; may further associate as a homohexadecamer. Part of the pre-integration complex (PIC) which is composed of viral genome, matrix protein, Vpr and integrase. Interacts with human SMARCB1/INI1 and human PSIP1/LEDGF isoform 1. Interacts with human KPNA3; this interaction might play a role in nuclear import of the pre-integration complex. Interacts with human NUP153; this interaction might play a role in nuclear import of the pre-integration complex. The cofactor is Mg(2+). Post-translationally, specific enzymatic cleavages by the viral protease yield mature proteins. The protease is released by autocatalytic cleavage. The polyprotein is cleaved during and after budding, this process is termed maturation. Proteolytic cleavage of p66 RT removes the RNase H domain to yield the p51 RT subunit. Nucleocapsid protein p7 might be further cleaved after virus entry.

The protein localises to the host cell membrane. It localises to the host endosome. The protein resides in the host multivesicular body. Its subcellular location is the virion membrane. It is found in the host nucleus. The protein localises to the host cytoplasm. It localises to the virion. The enzyme catalyses Endopeptidase for which the P1 residue is preferably hydrophobic.. The catalysed reaction is Endohydrolysis of RNA in RNA/DNA hybrids. Three different cleavage modes: 1. sequence-specific internal cleavage of RNA. Human immunodeficiency virus type 1 and Moloney murine leukemia virus enzymes prefer to cleave the RNA strand one nucleotide away from the RNA-DNA junction. 2. RNA 5'-end directed cleavage 13-19 nucleotides from the RNA end. 3. DNA 3'-end directed cleavage 15-20 nucleotides away from the primer terminus.. It carries out the reaction 3'-end directed exonucleolytic cleavage of viral RNA-DNA hybrid.. It catalyses the reaction DNA(n) + a 2'-deoxyribonucleoside 5'-triphosphate = DNA(n+1) + diphosphate. Its activity is regulated as follows. Protease: The viral protease is inhibited by many synthetic protease inhibitors (PIs), such as amprenavir, atazanavir, indinavir, loprinavir, nelfinavir, ritonavir and saquinavir. Use of protease inhibitors in tritherapy regimens permit more ambitious therapeutic strategies. Reverse transcriptase/ribonuclease H: RT can be inhibited either by nucleoside RT inhibitors (NRTIs) or by non nucleoside RT inhibitors (NNRTIs). NRTIs act as chain terminators, whereas NNRTIs inhibit DNA polymerization by binding a small hydrophobic pocket near the RT active site and inducing an allosteric change in this region. Classical NRTIs are abacavir, adefovir (PMEA), didanosine (ddI), lamivudine (3TC), stavudine (d4T), tenofovir (PMPA), zalcitabine (ddC), and zidovudine (AZT). Classical NNRTIs are atevirdine (BHAP U-87201E), delavirdine, efavirenz (DMP-266), emivirine (I-EBU), and nevirapine (BI-RG-587). The tritherapies used as a basic effective treatment of AIDS associate two NRTIs and one NNRTI. In terms of biological role, mediates, with Gag polyprotein, the essential events in virion assembly, including binding the plasma membrane, making the protein-protein interactions necessary to create spherical particles, recruiting the viral Env proteins, and packaging the genomic RNA via direct interactions with the RNA packaging sequence (Psi). Gag-Pol polyprotein may regulate its own translation, by the binding genomic RNA in the 5'-UTR. At low concentration, the polyprotein would promote translation, whereas at high concentration, the polyprotein would encapsidate genomic RNA and then shut off translation. Functionally, targets the polyprotein to the plasma membrane via a multipartite membrane-binding signal, that includes its myristoylated N-terminus. Matrix protein is part of the pre-integration complex. Implicated in the release from host cell mediated by Vpu. Binds to RNA. Its function is as follows. Forms the conical core that encapsulates the genomic RNA-nucleocapsid complex in the virion. Most core are conical, with only 7% tubular. The core is constituted by capsid protein hexamer subunits. The core is disassembled soon after virion entry. Host restriction factors such as TRIM5-alpha or TRIMCyp bind retroviral capsids and cause premature capsid disassembly, leading to blocks in reverse transcription. Capsid restriction by TRIM5 is one of the factors which restricts HIV-1 to the human species. Host PIN1 apparently facilitates the virion uncoating. On the other hand, interactions with PDZD8 or CYPA stabilize the capsid. Encapsulates and protects viral dimeric unspliced genomic RNA (gRNA). Binds these RNAs through its zinc fingers. Acts as a nucleic acid chaperone which is involved in rearangement of nucleic acid secondary structure during gRNA retrotranscription. Also facilitates template switch leading to recombination. As part of the polyprotein, participates in gRNA dimerization, packaging, tRNA incorporation and virion assembly. In terms of biological role, aspartyl protease that mediates proteolytic cleavages of Gag and Gag-Pol polyproteins during or shortly after the release of the virion from the plasma membrane. Cleavages take place as an ordered, step-wise cascade to yield mature proteins. This process is called maturation. Displays maximal activity during the budding process just prior to particle release from the cell. Also cleaves Nef and Vif, probably concomitantly with viral structural proteins on maturation of virus particles. Hydrolyzes host EIF4GI and PABP1 in order to shut off the capped cellular mRNA translation. The resulting inhibition of cellular protein synthesis serves to ensure maximal viral gene expression and to evade host immune response. Functionally, multifunctional enzyme that converts the viral RNA genome into dsDNA in the cytoplasm, shortly after virus entry into the cell. This enzyme displays a DNA polymerase activity that can copy either DNA or RNA templates, and a ribonuclease H (RNase H) activity that cleaves the RNA strand of RNA-DNA heteroduplexes in a partially processive 3' to 5' endonucleasic mode. Conversion of viral genomic RNA into dsDNA requires many steps. A tRNA(3)-Lys binds to the primer-binding site (PBS) situated at the 5'-end of the viral RNA. RT uses the 3' end of the tRNA primer to perform a short round of RNA-dependent minus-strand DNA synthesis. The reading proceeds through the U5 region and ends after the repeated (R) region which is present at both ends of viral RNA. The portion of the RNA-DNA heteroduplex is digested by the RNase H, resulting in a ssDNA product attached to the tRNA primer. This ssDNA/tRNA hybridizes with the identical R region situated at the 3' end of viral RNA. This template exchange, known as minus-strand DNA strong stop transfer, can be either intra- or intermolecular. RT uses the 3' end of this newly synthesized short ssDNA to perform the RNA-dependent minus-strand DNA synthesis of the whole template. RNase H digests the RNA template except for two polypurine tracts (PPTs) situated at the 5'-end and near the center of the genome. It is not clear if both polymerase and RNase H activities are simultaneous. RNase H probably can proceed both in a polymerase-dependent (RNA cut into small fragments by the same RT performing DNA synthesis) and a polymerase-independent mode (cleavage of remaining RNA fragments by free RTs). Secondly, RT performs DNA-directed plus-strand DNA synthesis using the PPTs that have not been removed by RNase H as primers. PPTs and tRNA primers are then removed by RNase H. The 3' and 5' ssDNA PBS regions hybridize to form a circular dsDNA intermediate. Strand displacement synthesis by RT to the PBS and PPT ends produces a blunt ended, linear dsDNA copy of the viral genome that includes long terminal repeats (LTRs) at both ends. Its function is as follows. Catalyzes viral DNA integration into the host chromosome, by performing a series of DNA cutting and joining reactions. This enzyme activity takes place after virion entry into a cell and reverse transcription of the RNA genome in dsDNA. The first step in the integration process is 3' processing. This step requires a complex comprising the viral genome, matrix protein, Vpr and integrase. This complex is called the pre-integration complex (PIC). The integrase protein removes 2 nucleotides from each 3' end of the viral DNA, leaving recessed CA OH's at the 3' ends. In the second step, the PIC enters cell nucleus. This process is mediated through integrase and Vpr proteins, and allows the virus to infect a non dividing cell. This ability to enter the nucleus is specific of lentiviruses, other retroviruses cannot and rely on cell division to access cell chromosomes. In the third step, termed strand transfer, the integrase protein joins the previously processed 3' ends to the 5' ends of strands of target cellular DNA at the site of integration. The 5'-ends are produced by integrase-catalyzed staggered cuts, 5 bp apart. A Y-shaped, gapped, recombination intermediate results, with the 5'-ends of the viral DNA strands and the 3' ends of target DNA strands remaining unjoined, flanking a gap of 5 bp. The last step is viral DNA integration into host chromosome. This involves host DNA repair synthesis in which the 5 bp gaps between the unjoined strands are filled in and then ligated. Since this process occurs at both cuts flanking the HIV genome, a 5 bp duplication of host DNA is produced at the ends of HIV-1 integration. Alternatively, Integrase may catalyze the excision of viral DNA just after strand transfer, this is termed disintegration. This Human immunodeficiency virus type 2 subtype B (isolate D205) (HIV-2) protein is Gag-Pol polyprotein (gag-pol).